The following is a 498-amino-acid chain: Dynein regulatory complex subunit 2 (498 aa).

Coiled coils occupy residues 98–160 (VIKS…RKTI), 250–311 (KDEK…KAQR), and 417–441 (SLRHRRAQLLEINEKLREMLRQYLD).

This sequence belongs to the DRC2 family. Component of the nexin-dynein regulatory complex (N-DRC). Interacts with DRC1.

The protein localises to the cytoplasm. It is found in the cytoskeleton. The protein resides in the flagellum basal body. Its subcellular location is the cell projection. It localises to the cilium. The protein localises to the flagellum. It is found in the flagellum axoneme. Its function is as follows. Component of the nexin-dynein regulatory complex (N-DRC), a key regulator of ciliary/flagellar motility which maintains the alignment and integrity of the distal axoneme and regulates microtubule sliding in motile axonemes. Plays a critical role in the assembly of N-DRC and also stabilizes the assembly of multiple inner dynein arms and radial spokes. Coassembles with DRC1 to form a central scaffold needed for assembly of the N-DRC and its attachment to the outer doublet microtubules. In Bos taurus (Bovine), this protein is Dynein regulatory complex subunit 2 (CCDC65).